The primary structure comprises 400 residues: CCA-adding enzyme (400 aa).

ATP contacts are provided by Gly28 and Arg31. Positions 28 and 31 each coordinate CTP. Residues Asp41 and Asp43 each contribute to the Mg(2+) site. Arg112, Asp155, Arg158, Arg161, and Arg164 together coordinate ATP. Positions 112, 155, 158, 161, and 164 each coordinate CTP.

The protein belongs to the tRNA nucleotidyltransferase/poly(A) polymerase family. Bacterial CCA-adding enzyme type 3 subfamily. As to quaternary structure, homodimer. Requires Mg(2+) as cofactor.

The catalysed reaction is a tRNA precursor + 2 CTP + ATP = a tRNA with a 3' CCA end + 3 diphosphate. The enzyme catalyses a tRNA with a 3' CCA end + 2 CTP + ATP = a tRNA with a 3' CCACCA end + 3 diphosphate. Catalyzes the addition and repair of the essential 3'-terminal CCA sequence in tRNAs without using a nucleic acid template. Adds these three nucleotides in the order of C, C, and A to the tRNA nucleotide-73, using CTP and ATP as substrates and producing inorganic pyrophosphate. tRNA 3'-terminal CCA addition is required both for tRNA processing and repair. Also involved in tRNA surveillance by mediating tandem CCA addition to generate a CCACCA at the 3' terminus of unstable tRNAs. While stable tRNAs receive only 3'-terminal CCA, unstable tRNAs are marked with CCACCA and rapidly degraded. This is CCA-adding enzyme from Staphylococcus aureus (strain bovine RF122 / ET3-1).